The chain runs to 277 residues: Large ribosomal subunit protein uL2c (277 aa).

The segment at 224–257 (VMNPIDHPHGGGEGRAPIGRKKPLTPWGHPALGR) is disordered.

This sequence belongs to the universal ribosomal protein uL2 family. Part of the 50S ribosomal subunit.

It localises to the plastid. The protein localises to the chloroplast. The polypeptide is Large ribosomal subunit protein uL2c (rpl2) (Anthoceros angustus (Hornwort)).